Here is a 209-residue protein sequence, read N- to C-terminus: Probable spore germination lipoprotein YlaJ (209 aa).

The N-terminal stretch at 1 to 16 (MRILFIIIQLTLILSA) is a signal peptide. Residue cysteine 17 is the site of N-palmitoyl cysteine attachment. Residue cysteine 17 is the site of S-diacylglycerol cysteine attachment. Disordered regions lie at residues 26-54 (QNVE…KDNG) and 165-209 (NDVI…NNND). Composition is skewed to basic and acidic residues over residues 28-54 (VEKE…KDNG) and 183-209 (LNRK…NNND).

It localises to the forespore inner membrane. In terms of biological role, probably contributes, directly or indirectly, to early events in germination. This chain is Probable spore germination lipoprotein YlaJ (ylaJ), found in Bacillus subtilis (strain 168).